The following is a 140-amino-acid chain: Nucleoside diphosphate kinase (140 aa).

6 residues coordinate ATP: K11, F59, R87, T93, R104, and N114. H117 functions as the Pros-phosphohistidine intermediate in the catalytic mechanism.

The protein belongs to the NDK family. As to quaternary structure, homotetramer. Requires Mg(2+) as cofactor.

The protein localises to the cytoplasm. It catalyses the reaction a 2'-deoxyribonucleoside 5'-diphosphate + ATP = a 2'-deoxyribonucleoside 5'-triphosphate + ADP. The enzyme catalyses a ribonucleoside 5'-diphosphate + ATP = a ribonucleoside 5'-triphosphate + ADP. Functionally, major role in the synthesis of nucleoside triphosphates other than ATP. The ATP gamma phosphate is transferred to the NDP beta phosphate via a ping-pong mechanism, using a phosphorylated active-site intermediate. This chain is Nucleoside diphosphate kinase, found in Agrobacterium fabrum (strain C58 / ATCC 33970) (Agrobacterium tumefaciens (strain C58)).